Consider the following 310-residue polypeptide: D-alanine--D-alanine ligase (310 aa).

One can recognise an ATP-grasp domain in the interval 105–301; it reads KQAFVSAGIL…FEELVERIIL (197 aa). 133-186 is an ATP binding site; the sequence is SFGLPLVVKPVQEGSSVGISIVKEESQLAAAVKLAFRHDDEILVEQFIKGQEVQ. Mg(2+) contacts are provided by Asp254, Glu267, and Asn269.

The protein belongs to the D-alanine--D-alanine ligase family. The cofactor is Mg(2+). Requires Mn(2+) as cofactor.

It localises to the cytoplasm. It carries out the reaction 2 D-alanine + ATP = D-alanyl-D-alanine + ADP + phosphate + H(+). It functions in the pathway cell wall biogenesis; peptidoglycan biosynthesis. Functionally, cell wall formation. This Pelobacter propionicus (strain DSM 2379 / NBRC 103807 / OttBd1) protein is D-alanine--D-alanine ligase.